The sequence spans 90 residues: Evasin P1128 (90 aa).

The signal sequence occupies residues 1–18 (MFIALGIQLFVAVTYAAG). Cystine bridges form between cysteine 29/cysteine 51, cysteine 33/cysteine 53, and cysteine 44/cysteine 64. Residue asparagine 32 is glycosylated (N-linked (GlcNAc...) asparagine).

The protein resides in the secreted. Functionally, salivary chemokine-binding protein which binds to host chemokines CXCL1, CXCL2, CXCL3, CXCL5 and CXCL8. The polypeptide is Evasin P1128 (Ixodes ricinus (Common tick)).